Consider the following 154-residue polypeptide: Transcriptional repressor NrdR (154 aa).

Residues 3-34 (CPFCNHGELKVIDSRNAPESNAIKRRRECLRC) fold into a zinc finger. One can recognise an ATP-cone domain in the interval 48–138 (VQVLKRDGRY…VYRRFKDVGE (91 aa)).

Belongs to the NrdR family. Zn(2+) is required as a cofactor.

In terms of biological role, negatively regulates transcription of bacterial ribonucleotide reductase nrd genes and operons by binding to NrdR-boxes. This chain is Transcriptional repressor NrdR, found in Chlamydia trachomatis serovar L2 (strain ATCC VR-902B / DSM 19102 / 434/Bu).